A 353-amino-acid polypeptide reads, in one-letter code: Melatonin receptor type 1A (353 aa).

Over 1–32 (MKGNVSELLNATQQAPGGGEGGRPRPSWLAST) the chain is Extracellular. 2 N-linked (GlcNAc...) asparagine glycosylation sites follow: Asn4 and Asn10. The chain crosses the membrane as a helical span at residues 33-53 (LAFILIFTIVVDILGNLLVIL). The Cytoplasmic segment spans residues 54 to 66 (SVYRNKKLRNSGN). The chain crosses the membrane as a helical span at residues 67 to 87 (IFVVSLAVADLVVAVYPYPLV). The Extracellular portion of the chain corresponds to 88-105 (LTSILNNGWNLGYLHCQV). Cys103 and Cys180 form a disulfide bridge. The helical transmembrane segment at 106–126 (SAFLMGLSVIGSIFNITGIAM) threads the bilayer. Residues 127–145 (NRYCYICHSLKYDKIYSNK) are Cytoplasmic-facing. Residues 146–166 (NSLCYVFLIWMLTLIAIMPNL) form a helical membrane-spanning segment. Residues 167 to 190 (QTGTLQYDPRIYSCTFTQSVSSAY) lie on the Extracellular side of the membrane. Residues 191-211 (TIAVVVFHFIVPMIIVIFCYL) form a helical membrane-spanning segment. Topologically, residues 212–243 (RIWVLVLQVRRRVKPDNKPKLKPQDFRNFVTM) are cytoplasmic. The chain crosses the membrane as a helical span at residues 244–264 (FVVFVLFAICWAPLNLIGLIV). The Extracellular segment spans residues 265–277 (ASDPATMVPRIPE). A helical transmembrane segment spans residues 278-298 (WLFVASYYLAYFNSCLNAIIY). At 299–353 (GLLNQNFRKEYKKIIVSLCTAKMFFVESSNEEADKIKCKPSPLIPNNNLIKVDSV) the chain is on the cytoplasmic side.

Belongs to the G-protein coupled receptor 1 family.

The protein resides in the cell membrane. In terms of biological role, high affinity receptor for melatonin. Likely to mediate the reproductive and circadian actions of melatonin. The activity of this receptor is mediated by pertussis toxin sensitive G proteins that inhibit adenylate cyclase activity. Possibly involved in sleep induction, by melatonin activation of the potassium channel KCNMA1/BK and the dissociation of G-beta and G-gamma subunits, thereby decreasing synaptic transmission. This chain is Melatonin receptor type 1A (Mtnr1a), found in Mus musculus (Mouse).